The chain runs to 202 residues: Probable molybdenum cofactor guanylyltransferase (202 aa).

GTP contacts are provided by residues 9-11 (VAG), lysine 22, asparagine 50, aspartate 77, and aspartate 102. Position 102 (aspartate 102) interacts with Mg(2+).

This sequence belongs to the MobA family. Mg(2+) serves as cofactor.

It is found in the cytoplasm. It carries out the reaction Mo-molybdopterin + GTP + H(+) = Mo-molybdopterin guanine dinucleotide + diphosphate. In terms of biological role, transfers a GMP moiety from GTP to Mo-molybdopterin (Mo-MPT) cofactor (Moco or molybdenum cofactor) to form Mo-molybdopterin guanine dinucleotide (Mo-MGD) cofactor. The chain is Probable molybdenum cofactor guanylyltransferase from Natronomonas pharaonis (strain ATCC 35678 / DSM 2160 / CIP 103997 / JCM 8858 / NBRC 14720 / NCIMB 2260 / Gabara) (Halobacterium pharaonis).